The following is a 455-amino-acid chain: Tumor necrosis factor receptor superfamily member 1A (455 aa).

A signal peptide spans Met1 to Gly29. Topologically, residues Leu30–Thr211 are extracellular. TNFR-Cys repeat units lie at residues Val43–Arg82, Glu83–Cys125, Gly126–Cys166, and Thr167–Leu196. 7 cysteine pairs are disulfide-bonded: Cys44–Cys58, Cys59–Cys72, Cys62–Cys81, Cys84–Cys99, Cys102–Cys117, Cys105–Cys125, and Cys127–Cys143. An N-linked (GlcNAc...) asparagine glycan is attached at Asn54. Asn145 and Asn151 each carry an N-linked (GlcNAc...) asparagine glycan. 5 cysteine pairs are disulfide-bonded: Cys146–Cys158, Cys149–Cys166, Cys168–Cys179, Cys182–Cys195, and Cys185–Cys191. A helical membrane pass occupies residues Val212–Leu232. The Cytoplasmic segment spans residues Met233 to Arg455. Residues Glu254–Phe273 are disordered. An N-SMase activation domain (NSD) region spans residues Leu338–Pro348. The Death domain maps to Pro356 to Leu441. A glycan ((Microbial infection) N-beta-linked (GlcNAc) arginine) is linked at Arg376.

Binding of TNF to the extracellular domain leads to homotrimerization. The aggregated death domains provide a novel molecular interface that interacts specifically with the death domain of TRADD. Various TRADD-interacting proteins such as TRAFS, RIPK1 and possibly FADD, are recruited to the complex by their association with TRADD. This complex activates at least two distinct signaling cascades, apoptosis and NF-kappa-B signaling. Interacts with BAG4, BABAM2, FEM1B, GRB2, SQSTM1 and TRPC4AP. Interacts directly with NOL3 (via CARD domain); inhibits TNF-signaling pathway. Interacts with SH3RF2, TRADD and RIPK1. SH3RF2 facilitates the recruitment of RIPK1 and TRADD to TNFRSF1A in a TNF-alpha-dependent process. Interacts with PGLYRP1; this interaction is important for cell death induction. Interacts (via death domain) with MADD (via death domain). In terms of assembly, (Microbial infection) Interacts with mumps virus protein SH; this interaction inhibits downstream NF-kappa-B pathway activation. As to quaternary structure, (Microbial infection) Interacts with HCV core protein. (Microbial infection) Interacts with human cytomegalovirus/HHV-5 protein UL138. In terms of assembly, (Microbial infection) Interacts with host TNFRSF1A; this interaction leads to the stimulation of both surface expression and shedding of TNFRSF1A. Post-translationally, the soluble form is produced from the membrane form by proteolytic processing. In terms of processing, (Microbial infection) Glycosylated at Arg-376 by enteropathogenic E.coli protein NleB1 and S.typhimurium protein Ssek3: arginine GlcNAcylation prevents homotypic/heterotypic death domain interactions.

It is found in the cell membrane. It localises to the golgi apparatus membrane. The protein localises to the secreted. Receptor for TNFSF2/TNF-alpha and homotrimeric TNFSF1/lymphotoxin-alpha. The adapter molecule FADD recruits caspase-8 to the activated receptor. The resulting death-inducing signaling complex (DISC) performs caspase-8 proteolytic activation which initiates the subsequent cascade of caspases (aspartate-specific cysteine proteases) mediating apoptosis. Contributes to the induction of non-cytocidal TNF effects including anti-viral state and activation of the acid sphingomyelinase. The polypeptide is Tumor necrosis factor receptor superfamily member 1A (TNFRSF1A) (Homo sapiens (Human)).